Here is a 29-residue protein sequence, read N- to C-terminus: Trypsin inhibitor 3 (29 aa).

Cystine bridges form between Cys-3-Cys-20, Cys-10-Cys-22, and Cys-16-Cys-28.

The protein belongs to the protease inhibitor I7 (squash-type serine protease inhibitor) family.

The protein resides in the secreted. Its function is as follows. Strongly inhibits trypsin, weakly inhibits chymotrypsin. This Cyclanthera pedata (Achocha) protein is Trypsin inhibitor 3.